Here is a 214-residue protein sequence, read N- to C-terminus: MQPILDWEKNELNTTGLGLIPMVIESSGRGERAYDIYSRLLRERIIFLVGPVTETSANLVIAQLLFLESENSEKDISLYINSPGGLVTAGLAVYDTMQFIKPDVSTLCIGQAASMGALLLTAGAKGKRYCLPNSRVMIHQPLGGFQGQASDIEIHAKEILALKGRLNEILAKHTSQTIRTIEKDTDRDNFLGAEAAVKYSLVDAVLTSRKVKHE.

Ser114 functions as the Nucleophile in the catalytic mechanism. His139 is an active-site residue.

The protein belongs to the peptidase S14 family. As to quaternary structure, fourteen ClpP subunits assemble into 2 heptameric rings which stack back to back to give a disk-like structure with a central cavity, resembling the structure of eukaryotic proteasomes.

It is found in the cytoplasm. The enzyme catalyses Hydrolysis of proteins to small peptides in the presence of ATP and magnesium. alpha-casein is the usual test substrate. In the absence of ATP, only oligopeptides shorter than five residues are hydrolyzed (such as succinyl-Leu-Tyr-|-NHMec, and Leu-Tyr-Leu-|-Tyr-Trp, in which cleavage of the -Tyr-|-Leu- and -Tyr-|-Trp bonds also occurs).. Its function is as follows. Cleaves peptides in various proteins in a process that requires ATP hydrolysis. Has a chymotrypsin-like activity. Plays a major role in the degradation of misfolded proteins. In Nitrosomonas eutropha (strain DSM 101675 / C91 / Nm57), this protein is ATP-dependent Clp protease proteolytic subunit.